An 837-amino-acid chain; its full sequence is Protein translocase subunit SecA 1 (837 aa).

ATP is bound by residues glutamine 85, glycine 103–threonine 107, and aspartate 492. The segment at lysine 791 to alanine 837 is disordered. Residues glycine 800–arginine 817 show a composition bias toward basic and acidic residues. The Zn(2+) site is built by cysteine 821, cysteine 823, cysteine 832, and histidine 833. Over residues lysine 827 to alanine 837 the composition is skewed to basic residues.

It belongs to the SecA family. Monomer and homodimer. Part of the essential Sec protein translocation apparatus which comprises SecA, SecYEG and auxiliary proteins SecDF. Other proteins may also be involved. Requires Zn(2+) as cofactor.

The protein localises to the cell membrane. It localises to the cytoplasm. It carries out the reaction ATP + H2O + cellular proteinSide 1 = ADP + phosphate + cellular proteinSide 2.. Its function is as follows. Part of the Sec protein translocase complex. Interacts with the SecYEG preprotein conducting channel. Has a central role in coupling the hydrolysis of ATP to the transfer of proteins into and across the cell membrane, serving as an ATP-driven molecular motor driving the stepwise translocation of polypeptide chains across the membrane. The protein is Protein translocase subunit SecA 1 of Listeria monocytogenes serovar 1/2a (strain ATCC BAA-679 / EGD-e).